A 336-amino-acid polypeptide reads, in one-letter code: Cyclin-H1-1 (336 aa).

A2 is subject to N-acetylalanine. The segment at 297–336 (KSCLGHSSSHDESKKREKRSKHKSHRSSNDTPNGAPPPIG) is disordered. The segment covering 312–322 (REKRSKHKSHR) has biased composition (basic residues).

Belongs to the cyclin family. In terms of assembly, interacts with CDKA-1, CDKD-2 and CDKD-3, but not CDKD-1 and CDKF-1.

The protein localises to the cytoplasm. Its subcellular location is the nucleus. In terms of biological role, associates with CDK-2 and CDK-3 and activates the CDK kinases. This Arabidopsis thaliana (Mouse-ear cress) protein is Cyclin-H1-1 (CYCH1-1).